A 191-amino-acid chain; its full sequence is Negative modulator of initiation of replication (191 aa).

Residues 96–97 are interaction with DNA; sequence AV.

It belongs to the SeqA family. In terms of assembly, homodimer. Polymerizes to form helical filaments.

The protein localises to the cytoplasm. Negative regulator of replication initiation, which contributes to regulation of DNA replication and ensures that replication initiation occurs exactly once per chromosome per cell cycle. Binds to pairs of hemimethylated GATC sequences in the oriC region, thus preventing assembly of replication proteins and re-initiation at newly replicated origins. Repression is relieved when the region becomes fully methylated. The sequence is that of Negative modulator of initiation of replication from Shewanella amazonensis (strain ATCC BAA-1098 / SB2B).